Reading from the N-terminus, the 64-residue chain is Photosystem II reaction center protein J (64 aa).

Residues L35–Y55 form a helical membrane-spanning segment.

This sequence belongs to the PsbJ family. As to quaternary structure, PSII is composed of 1 copy each of membrane proteins PsbA, PsbB, PsbC, PsbD, PsbE, PsbF, PsbH, PsbI, PsbJ, PsbK, PsbL, PsbM, PsbT, PsbX, PsbY, Psb30/Ycf12, peripheral proteins PsbO, CyanoQ (PsbQ), PsbU, PsbV and a large number of cofactors. It forms dimeric complexes.

The protein localises to the cellular thylakoid membrane. One of the components of the core complex of photosystem II (PSII). PSII is a light-driven water:plastoquinone oxidoreductase that uses light energy to abstract electrons from H(2)O, generating O(2) and a proton gradient subsequently used for ATP formation. It consists of a core antenna complex that captures photons, and an electron transfer chain that converts photonic excitation into a charge separation. This Prochlorococcus marinus (strain MIT 9515) protein is Photosystem II reaction center protein J.